We begin with the raw amino-acid sequence, 1479 residues long: Type VII secretion system protein EssC (1479 aa).

The Cytoplasmic segment spans residues 1–229 (MHKLIIKYNK…RPPQPIQKNN (229 aa)). A helical membrane pass occupies residues 230–252 (TVIWRSIIPPLVMIALTVVIFLV). Residues 253 to 256 (RPIG) are Extracellular-facing. The helical transmembrane segment at 257 to 279 (IYILMMIGMSTVTIVFGITTYFS) threads the bilayer. Residues 280–1479 (EKKKYNKDVE…QAYQKIRWFK (1200 aa)) are Cytoplasmic-facing. 2 consecutive FtsK domains span residues 652–846 (DDIL…QDSN) and 997–1183 (QGPM…SEVS). Residues 672-679 (GTTGSGKS) and 1014-1021 (GSPGYGRT) contribute to the ATP site.

Belongs to the EssC family. Homooligomer. Interacts with EsaE.

Its subcellular location is the cell membrane. Functionally, component of the type VII secretion system (Ess). Required for the secretion of substrates including EsxA and EsxB. However, unable to support secretion of the substrate protein EsxC. In Staphylococcus aureus (strain Mu50 / ATCC 700699), this protein is Type VII secretion system protein EssC.